The following is a 272-amino-acid chain: MTDLHSLLIAFILGVVEGLTEFLPVSSTGHMIIVGHWLGFVDEKAKTFEVIIQLGSILAVVVMFWRRLFGLIGIHFGEVPHEGHTAGRLKLTHILLAMIPAVVLGLVFHDVIKSLFYPQNVMYALVVGGFLLLAAEWLKPKKPRAVGLDDITHRQAFMIGCFQCLALWPGFSRSGATISGGMLVGVSRYAASEFSFILAVPMMMGATVLDLYKSWHFLSLSDVPMFAVGFVTAFLVALIAIKTFLKIIKRISFVPFAIYRFIVAGVVYMVFM.

7 consecutive transmembrane segments (helical) span residues 6-26, 45-65, 92-112, 115-135, 189-209, 225-245, and 251-271; these read SLLI…LPVS, AKTF…VMFW, THIL…HDVI, LFYP…LLAA, YAAS…ATVL, MFAV…KTFL, and ISFV…YMVF.

This sequence belongs to the UppP family.

The protein resides in the cell inner membrane. The enzyme catalyses di-trans,octa-cis-undecaprenyl diphosphate + H2O = di-trans,octa-cis-undecaprenyl phosphate + phosphate + H(+). Catalyzes the dephosphorylation of undecaprenyl diphosphate (UPP). Confers resistance to bacitracin. The chain is Undecaprenyl-diphosphatase from Pectobacterium carotovorum subsp. carotovorum (strain PC1).